We begin with the raw amino-acid sequence, 360 residues long: Coiled-coil domain-containing protein 86 (360 aa).

Positions 1 to 12 are enriched in basic residues; that stretch reads MDTPLRRSRRLG. Disordered stretches follow at residues 1–314 and 328–360; these read MDTP…ENER and LKRA…AAKI. Serine 21, serine 24, serine 47, serine 50, and serine 58 each carry phosphoserine. Threonine 65 is subject to Phosphothreonine. A phosphoserine mark is found at serine 66, serine 69, serine 80, serine 91, serine 102, serine 110, serine 113, and serine 128. Residues 66-83 show a composition bias toward polar residues; it reads SPGSPRLQQGSGLESPQG. A compositionally biased stretch (pro residues) spans 153 to 164; sequence QLPPVPGSPEPY. Phosphoserine occurs at positions 188, 217, and 218. Basic residues predominate over residues 238–254; the sequence is GKPKSGRVWKDRSKKRF. Positions 272 to 323 form a coiled coil; the sequence is KERQERKLAKDFARHLEEEKERRRQEKKQRRAENLKRRLENERKAEVVQVIR. Basic and acidic residues-rich tracts occupy residues 273–295 and 302–314; these read ERQE…ERRR and RAEN…ENER. Residue arginine 342 is modified to Citrulline.

Citrullinated by PADI4.

It localises to the nucleus. The protein localises to the chromosome. The protein resides in the nucleolus. Functionally, required for proper chromosome segregation during mitosis and error-free mitotic progression. The protein is Coiled-coil domain-containing protein 86 of Pongo abelii (Sumatran orangutan).